A 146-amino-acid chain; its full sequence is Hemoglobin subunit beta (146 aa).

Residue Val-1 is modified to N-acetylvaline. Positions His-2 to His-146 constitute a Globin domain. His-63 lines the heme b pocket. Lys-82 is modified (N6-acetyllysine). His-92 is a binding site for heme b. Cys-93 carries the S-nitrosocysteine modification. An N6-acetyllysine modification is found at Lys-144.

It belongs to the globin family. In terms of assembly, heterotetramer of two alpha chains and two beta chains. In terms of tissue distribution, red blood cells.

Involved in oxygen transport from the lung to the various peripheral tissues. The polypeptide is Hemoglobin subunit beta (HBB) (Mesocricetus brandti (Brandt's hamster)).